The sequence spans 335 residues: tRNA methyltransferase 10 homolog A (335 aa).

Disordered stretches follow at residues 1–91 (MSSE…DRKR) and 279–335 (VPAH…PDPQ). Serine 22 and serine 24 each carry phosphoserine. Residues 52 to 62 (RLWEEQREQRK) show a composition bias toward basic and acidic residues. Residues 52–84 (RLWEEQREQRKEKRKEKRKRKKLERRCQLESNS) are a coiled coil. Residues 63-75 (EKRKEKRKRKKLE) are compositionally biased toward basic residues. One can recognise an SAM-dependent MTase TRM10-type domain in the interval 88-279 (DRKRIRRHVA…TILPPRKGAV (192 aa)). The segment covering 304 to 319 (EGEHGRDDPGSPHKEQ) has biased composition (basic and acidic residues). The segment covering 320 to 335 (QGQQSSSVSAVSPDPQ) has biased composition (low complexity). Residue serine 331 is modified to Phosphoserine.

Belongs to the class IV-like SAM-binding methyltransferase superfamily. TRM10 family. As to quaternary structure, interacts with tRNA. In terms of tissue distribution, ubiquitously expressed. Is more abundant in brain and pancreatic islets compared to other tissues (at protein level).

The protein localises to the nucleus. It is found in the nucleolus. It catalyses the reaction guanosine(9) in tRNA + S-adenosyl-L-methionine = N(1)-methylguanosine(9) in tRNA + S-adenosyl-L-homocysteine + H(+). Functionally, S-adenosyl-L-methionine-dependent guanine N(1)-methyltransferase that catalyzes the formation of N(1)-methylguanine at position 9 (m1G9) in tRNAs. Probably not able to catalyze formation of N(1)-methyladenine at position 9 (m1A9) in tRNAs. The chain is tRNA methyltransferase 10 homolog A (Trmt10a) from Rattus norvegicus (Rat).